The following is a 98-amino-acid chain: uncharacterized protein (98 aa).

Basic residues predominate over residues 1-10 (MARRRKPLHR). Residues 1 to 21 (MARRRKPLHRQRPEPPSWALR) form a disordered region.

This is an uncharacterized protein from Mycobacterium bovis (strain ATCC BAA-935 / AF2122/97).